The following is a 729-amino-acid chain: Polyribonucleotide nucleotidyltransferase (729 aa).

2 residues coordinate Mg(2+): Asp-485 and Asp-491. The 60-residue stretch at Pro-552–Ile-611 folds into the KH domain. One can recognise an S1 motif domain in the interval Gly-621–Lys-689. The segment at Thr-710–Glu-729 is disordered.

Belongs to the polyribonucleotide nucleotidyltransferase family. Component of the RNA degradosome, which is a multiprotein complex involved in RNA processing and mRNA degradation. Requires Mg(2+) as cofactor.

It localises to the cytoplasm. The catalysed reaction is RNA(n+1) + phosphate = RNA(n) + a ribonucleoside 5'-diphosphate. Involved in mRNA degradation. Catalyzes the phosphorolysis of single-stranded polyribonucleotides processively in the 3'- to 5'-direction. This is Polyribonucleotide nucleotidyltransferase from Legionella pneumophila (strain Paris).